The following is a 337-amino-acid chain: Anthranilate phosphoribosyltransferase (337 aa).

5-phospho-alpha-D-ribose 1-diphosphate contacts are provided by residues glycine 80, 83–84 (GD), threonine 88, 90–93 (NIST), 108–116 (KHGNRAVSS), and serine 120. Anthranilate is bound at residue glycine 80. Serine 92 is a binding site for Mg(2+). Asparagine 111 is a binding site for anthranilate. Arginine 166 contributes to the anthranilate binding site. 2 residues coordinate Mg(2+): aspartate 224 and glutamate 225.

This sequence belongs to the anthranilate phosphoribosyltransferase family. In terms of assembly, homodimer. It depends on Mg(2+) as a cofactor.

The enzyme catalyses N-(5-phospho-beta-D-ribosyl)anthranilate + diphosphate = 5-phospho-alpha-D-ribose 1-diphosphate + anthranilate. The protein operates within amino-acid biosynthesis; L-tryptophan biosynthesis; L-tryptophan from chorismate: step 2/5. Functionally, catalyzes the transfer of the phosphoribosyl group of 5-phosphorylribose-1-pyrophosphate (PRPP) to anthranilate to yield N-(5'-phosphoribosyl)-anthranilate (PRA). The chain is Anthranilate phosphoribosyltransferase from Anaeromyxobacter sp. (strain K).